The primary structure comprises 106 residues: Ribonuclease P protein component 4 (106 aa).

Positions 63, 66, 89, and 92 each coordinate Zn(2+).

The protein belongs to the eukaryotic/archaeal RNase P protein component 4 family. In terms of assembly, consists of a catalytic RNA component and at least 4-5 protein subunits. Zn(2+) is required as a cofactor.

The protein localises to the cytoplasm. It catalyses the reaction Endonucleolytic cleavage of RNA, removing 5'-extranucleotides from tRNA precursor.. Functionally, part of ribonuclease P, a protein complex that generates mature tRNA molecules by cleaving their 5'-ends. The protein is Ribonuclease P protein component 4 of Methanosphaerula palustris (strain ATCC BAA-1556 / DSM 19958 / E1-9c).